A 405-amino-acid chain; its full sequence is Cytochrome b (405 aa).

A helical membrane pass occupies residues 44–64 (FGSLAGIAMIIMIATGIFLAM). Positions 94 and 108 each coordinate heme b. The next 8 membrane-spanning stretches (helical) occupy residues 97–117 (GASMFFIVVYVHMFRGLYYGS), 124–144 (VLWWLGLVILLLMMATAFMGY), 163–183 (FSAIPVVGDDIVTLLWGGFSV), 191–211 (FFSLHYLFPMLLFAVVFLHMW), 245–265 (FGLGIFLMVFCFFVFFAPNFF), 303–323 (LGGVLAMFGAILILFVLPWLD), 338–358 (GFFWVFLADCLLLGYLGAMPA), and 368–388 (LATIYYFLHFLVITPLVGWFE). Residues His195 and His209 each coordinate heme b.

It belongs to the cytochrome b family. The main subunits of complex b-c1 are: cytochrome b, cytochrome c1 and the Rieske protein. Heme b is required as a cofactor.

Its subcellular location is the cell membrane. Its function is as follows. Component of the ubiquinol-cytochrome c reductase complex (complex III or cytochrome b-c1 complex), which is a respiratory chain that generates an electrochemical potential coupled to ATP synthesis. The chain is Cytochrome b (petB) from Rhodospirillum rubrum.